The following is a 524-amino-acid chain: Cysteine--tRNA ligase (524 aa).

Residue Cys29 coordinates Zn(2+). The short motif at 31 to 41 (PTVQAAPHVGH) is the 'HIGH' region element. Cys207, His232, and Glu236 together coordinate Zn(2+). Over residues 246-258 (ARPASNAASADSP) the composition is skewed to low complexity. Positions 246-273 (ARPASNAASADSPGPGGGEPGGGEPSSG) are disordered. Gly residues predominate over residues 259–270 (GPGGGEPGGGEP). Residues 291-295 (KMSKS) carry the 'KMSKS' region motif. Lys294 provides a ligand contact to ATP.

Belongs to the class-I aminoacyl-tRNA synthetase family. Monomer. It depends on Zn(2+) as a cofactor.

It is found in the cytoplasm. The enzyme catalyses tRNA(Cys) + L-cysteine + ATP = L-cysteinyl-tRNA(Cys) + AMP + diphosphate. In Frankia casuarinae (strain DSM 45818 / CECT 9043 / HFP020203 / CcI3), this protein is Cysteine--tRNA ligase.